Reading from the N-terminus, the 371-residue chain is MLCRLFTLFITAALACCVAAIPLQGQQSNSIIERTPGRWPWHPHRPRPHHPRPHWPFPKPHWPKPHWPKPHWPKPEPEPTAVPTMAPEPTTVPPTEPSGTYPPETTPTVEPTVVPTDVPTTFPSMTPTADPTVAPTGTSVPTGVPTGVPPMPGTIPFGTVINQCTVNGTIALTFDDGPYDYTGPLLDIFAKNGAKGTFFVNAMNFGNIMDYADVIKRMYKEGHMLGSHTYSHADLSKLNSTGIALEMKKLDDILAPIIDGNRPTYMRAPYFAYSDTVSKTMAELKYHMIDANIDTKDYEHATPDGVPISVENFKKGLEAGGTITLCHDVHQTTVELLIQQLLDEIKKRGLRAVTVGECLGDPQANWYRPAQ.

An N-terminal signal peptide occupies residues 1–20 (MLCRLFTLFITAALACCVAA). Residues 73–112 (PKPEPEPTAVPTMAPEPTTVPPTEPSGTYPPETTPTVEPT) are disordered. Composition is skewed to low complexity over residues 79–89 (PTAVPTMAPEP) and 102–112 (PPETTPTVEPT). C164 and C358 are joined by a disulfide. An N-linked (GlcNAc...) asparagine glycan is attached at N167. The region spanning 168–353 (GTIALTFDDG…EIKKRGLRAV (186 aa)) is the NodB homology domain. Catalysis depends on D175, which acts as the Proton acceptor. D175 lines the acetate pocket. Residues D176, H228, and H232 each coordinate Co(2+). A glycan (N-linked (GlcNAc...) asparagine) is linked at N239. Residue Y270 coordinates acetate. Residue H327 is the Proton donor of the active site.

The protein belongs to the polysaccharide deacetylase family. Requires Co(2+) as cofactor.

It catalyses the reaction [(1-&gt;4)-N-acetyl-beta-D-glucosaminyl](n) + n H2O = chitosan + n acetate. Its function is as follows. Hydrolyzes the N-acetamido groups of N-acetyl-D-glucosamine residues in chitin to form chitosan and acetate. The sequence is that of Chitin deacetylase from Arthroderma benhamiae (strain ATCC MYA-4681 / CBS 112371) (Trichophyton mentagrophytes).